Here is a 229-residue protein sequence, read N- to C-terminus: Putative N-acetylmannosamine-6-phosphate 2-epimerase (229 aa).

Belongs to the NanE family.

It catalyses the reaction an N-acyl-D-glucosamine 6-phosphate = an N-acyl-D-mannosamine 6-phosphate. It functions in the pathway amino-sugar metabolism; N-acetylneuraminate degradation; D-fructose 6-phosphate from N-acetylneuraminate: step 3/5. Converts N-acetylmannosamine-6-phosphate (ManNAc-6-P) to N-acetylglucosamine-6-phosphate (GlcNAc-6-P). This Shigella sonnei (strain Ss046) protein is Putative N-acetylmannosamine-6-phosphate 2-epimerase.